Consider the following 172-residue polypeptide: Protein-export protein SecB (172 aa).

The interval 153 to 172 is disordered; sequence AQGQGGDSGIVMPDGSQARH.

This sequence belongs to the SecB family. Homotetramer, a dimer of dimers. One homotetramer interacts with 1 SecA dimer.

Its subcellular location is the cytoplasm. Functionally, one of the proteins required for the normal export of preproteins out of the cell cytoplasm. It is a molecular chaperone that binds to a subset of precursor proteins, maintaining them in a translocation-competent state. It also specifically binds to its receptor SecA. The protein is Protein-export protein SecB of Cupriavidus metallidurans (strain ATCC 43123 / DSM 2839 / NBRC 102507 / CH34) (Ralstonia metallidurans).